The sequence spans 852 residues: Exported protein YdbA (852 aa).

The first 21 residues, 1-21 (MQRKTLLSACIALALSGQGWA), serve as a signal peptide directing secretion. Disordered stretches follow at residues 30 to 50 (TTGE…KLSP), 91 to 145 (DDDH…FNND), 307 to 354 (TITN…QDGD), 407 to 449 (TNGG…KVIQ), and 506 to 531 (NGGT…VDGK). A compositionally biased stretch (low complexity) spans 307 to 319 (TITNGGTGTQING). Residues 339–348 (GTEINGNNGK) show a composition bias toward polar residues. The segment covering 506–516 (NGGTGTQINGN) has biased composition (low complexity). Positions 517–526 (DATANNSGKT) are enriched in polar residues.

It localises to the secreted. In terms of biological role, the full-length protein (which is about 2000 amino acids long) is part of the autotransporter family. The sequence is that of Exported protein YdbA (ydbA) from Escherichia coli (strain K12).